The following is a 525-amino-acid chain: Tigger transposable element-derived protein 2 (525 aa).

An HTH psq-type domain is found at 1 to 52 (MLGKRKRVVLTIKDKLDIIKKLEEGISFKKLSVVYGIGESTVRDIKKNKERI). 2 DNA-binding regions (H-T-H motif) span residues 28 to 48 (FKKL…IKKN) and 100 to 132 (TICA…FKQR). The region spanning 67-139 (KRKSMKSSTY…KQRHGIPKAA (73 aa)) is the HTH CENPB-type domain. A DDE-1 domain is found at 168 to 385 (LQPEQIYGAD…VKSSTITKAW (218 aa)). Positions 442 to 474 (QVLTDSESAEDQTKAAEQKPSSKSRKTELNPEK) are disordered.

The protein belongs to the tigger transposable element derived protein family.

The protein localises to the nucleus. The polypeptide is Tigger transposable element-derived protein 2 (TIGD2) (Homo sapiens (Human)).